Here is a 576-residue protein sequence, read N- to C-terminus: Septation ring formation regulator EzrA (576 aa).

Residues 1-7 are Extracellular-facing; the sequence is MSSTVII. Residues 8-26 form a helical membrane-spanning segment; it reads LIVVLLVILVAFYAFAILM. The Cytoplasmic segment spans residues 27–576; the sequence is RKKTEDRILA…FKNKPTPDYL (550 aa). 3 coiled-coil regions span residues 105 to 134, 254 to 305, and 356 to 402; these read RARESVADSEAQIEMMEGDVEGIRQGVAQL, ENVN…FERE, and GYQE…IEKN.

Belongs to the EzrA family.

The protein resides in the cell membrane. In terms of biological role, negative regulator of FtsZ ring formation; modulates the frequency and position of FtsZ ring formation. Inhibits FtsZ ring formation at polar sites. Interacts either with FtsZ or with one of its binding partners to promote depolymerization. The protein is Septation ring formation regulator EzrA of Lactococcus lactis subsp. cremoris (strain MG1363).